The primary structure comprises 315 residues: S-methyl-5'-thioadenosine phosphorylase (315 aa).

Phosphate is bound by residues serine 22, 65 to 66 (RH), and 98 to 99 (SA). Methionine 205 serves as a coordination point for substrate. Serine 206 lines the phosphate pocket. 229-231 (DYD) contributes to the substrate binding site.

Belongs to the PNP/MTAP phosphorylase family. MTAP subfamily. As to quaternary structure, homotrimer.

Its subcellular location is the cytoplasm. The protein localises to the nucleus. The catalysed reaction is S-methyl-5'-thioadenosine + phosphate = 5-(methylsulfanyl)-alpha-D-ribose 1-phosphate + adenine. It functions in the pathway amino-acid biosynthesis; L-methionine biosynthesis via salvage pathway; S-methyl-5-thio-alpha-D-ribose 1-phosphate from S-methyl-5'-thioadenosine (phosphorylase route): step 1/1. Catalyzes the reversible phosphorylation of S-methyl-5'-thioadenosine (MTA) to adenine and 5-methylthioribose-1-phosphate. Involved in the breakdown of MTA, a major by-product of polyamine biosynthesis. Responsible for the first step in the methionine salvage pathway after MTA has been generated from S-adenosylmethionine. Has broad substrate specificity with 6-aminopurine nucleosides as preferred substrates. The chain is S-methyl-5'-thioadenosine phosphorylase from Mycosarcoma maydis (Corn smut fungus).